Reading from the N-terminus, the 467-residue chain is Probable glutamate decarboxylase gamma (467 aa).

At lysine 278 the chain carries N6-(pyridoxal phosphate)lysine.

It belongs to the group II decarboxylase family. Pyridoxal 5'-phosphate is required as a cofactor.

The catalysed reaction is L-glutamate + H(+) = 4-aminobutanoate + CO2. In Listeria innocua serovar 6a (strain ATCC BAA-680 / CLIP 11262), this protein is Probable glutamate decarboxylase gamma.